The sequence spans 846 residues: FNIP repeat-containing protein DDB_G0289381 (846 aa).

A compositionally biased stretch (basic residues) spans 1-11 (MKLLSFKKKPS). Residues 1-39 (MKLLSFKKKPSLTKSQSCPDKLKNLKEQQKDPKNGANYD) form a disordered region. Basic and acidic residues predominate over residues 20-33 (DKLKNLKEQQKDPK). FNIP repeat units follow at residues 159-193 (IPNH…FGEK), 194-239 (FNQV…FGNN), 240-283 (FDQI…FQEN), and 284-325 (FNQP…YGGD). The tract at residues 362–384 (SSISLDISGGGSGSGSGVNSTTT) is disordered. FNIP repeat units lie at residues 458–500 (FQQL…FGDG), 501–546 (FNQQ…FGKS), and 654–693 (FNQS…MFNK). The segment at 702 to 734 (SNNNNENNNENNNENNNENNNENNNENNNNTNS) is disordered. Positions 702-734 (SNNNNENNNENNNENNNENNNENNNENNNNTNS) form a coiled coil.

This is FNIP repeat-containing protein DDB_G0289381 from Dictyostelium discoideum (Social amoeba).